We begin with the raw amino-acid sequence, 94 residues long: Co-chaperonin GroES (94 aa).

This sequence belongs to the GroES chaperonin family. In terms of assembly, heptamer of 7 subunits arranged in a ring. Interacts with the chaperonin GroEL.

The protein localises to the cytoplasm. Its function is as follows. Together with the chaperonin GroEL, plays an essential role in assisting protein folding. The GroEL-GroES system forms a nano-cage that allows encapsulation of the non-native substrate proteins and provides a physical environment optimized to promote and accelerate protein folding. GroES binds to the apical surface of the GroEL ring, thereby capping the opening of the GroEL channel. The chain is Co-chaperonin GroES from Lactobacillus delbrueckii subsp. bulgaricus (strain ATCC BAA-365 / Lb-18).